The primary structure comprises 354 residues: Kelch domain-containing protein 8B (354 aa).

8 Kelch repeats span residues 1 to 31 (MSAG…HQDG), 32 to 79 (HLLV…VLGK), 81 to 127 (VLVV…ERDG), 128 to 175 (MVYA…LHGN), 176 to 222 (KIYV…MAEG), 224 to 281 (VFSL…SLGG), 282 to 329 (HIVA…QAGP), and 331 to 354 (LFVI…RDGV).

The protein localises to the cytoplasm. Its subcellular location is the midbody. Involved in pinching off the separated nuclei at the cleavage furrow and in cytokinesis. Required for mitotic integrity and maintenance of chromosomal stability. Protects cells against mitotic errors, centrosomal amplification, micronucleus formation and aneuploidy. Plays a key role of midbody function involving abscission of the daughter cells during cytokinesis and appropriate chromosomal and nuclear segregation into the daughter cells. The sequence is that of Kelch domain-containing protein 8B from Homo sapiens (Human).